A 118-amino-acid chain; its full sequence is Heavy metal-associated isoprenylated plant protein 47 (118 aa).

One can recognise an HMA domain in the interval 1-67; it reads MRIKLSVNSE…KACHVTLETL (67 aa). Cysteine methyl ester is present on C115. C115 carries S-farnesyl cysteine lipidation. A propeptide spans 116-118 (removed in mature form); the sequence is LVM.

This sequence belongs to the HIPP family.

Heavy-metal-binding protein. In Arabidopsis thaliana (Mouse-ear cress), this protein is Heavy metal-associated isoprenylated plant protein 47.